A 103-amino-acid chain; its full sequence is Pyrimidine/purine nucleoside phosphorylase (103 aa).

It belongs to the nucleoside phosphorylase PpnP family.

It catalyses the reaction a purine D-ribonucleoside + phosphate = a purine nucleobase + alpha-D-ribose 1-phosphate. The catalysed reaction is adenosine + phosphate = alpha-D-ribose 1-phosphate + adenine. The enzyme catalyses cytidine + phosphate = cytosine + alpha-D-ribose 1-phosphate. It carries out the reaction guanosine + phosphate = alpha-D-ribose 1-phosphate + guanine. It catalyses the reaction inosine + phosphate = alpha-D-ribose 1-phosphate + hypoxanthine. The catalysed reaction is thymidine + phosphate = 2-deoxy-alpha-D-ribose 1-phosphate + thymine. The enzyme catalyses uridine + phosphate = alpha-D-ribose 1-phosphate + uracil. It carries out the reaction xanthosine + phosphate = alpha-D-ribose 1-phosphate + xanthine. Catalyzes the phosphorolysis of diverse nucleosides, yielding D-ribose 1-phosphate and the respective free bases. Can use uridine, adenosine, guanosine, cytidine, thymidine, inosine and xanthosine as substrates. Also catalyzes the reverse reactions. The sequence is that of Pyrimidine/purine nucleoside phosphorylase from Methylobacillus flagellatus (strain ATCC 51484 / DSM 6875 / VKM B-1610 / KT).